Here is a 336-residue protein sequence, read N- to C-terminus: Aspartate--ammonia ligase (336 aa).

The protein belongs to the class-II aminoacyl-tRNA synthetase family. AsnA subfamily.

The protein resides in the cytoplasm. It catalyses the reaction L-aspartate + NH4(+) + ATP = L-asparagine + AMP + diphosphate + H(+). It participates in amino-acid biosynthesis; L-asparagine biosynthesis; L-asparagine from L-aspartate (ammonia route): step 1/1. In Lactobacillus acidophilus (strain ATCC 700396 / NCK56 / N2 / NCFM), this protein is Aspartate--ammonia ligase.